The primary structure comprises 392 residues: MKPLVPLLFLLVSCRAQGNDKLTFANNQFGLRLLNTLPSPPEENVFFSPYSVSTALGMAYAGARGDTQEELSEQLGYTAAGLSQDDVFNAYSDHTQWLKASRSNSTLSVANAAVLHDKVGLRYTFQRTIDHAFDADILKVDFVNERKGAVDRINYWVKDKTNGKIRSLFNKPLESETRLVLLNAIYFKGSWNTRFNKSRTEKSEFLNGGVTPTKVDMMMGSMNIGHHFFRDLKIDVADFPYQGRDYSMTVILPWRNDGVEAIKQNLTLDLFQKLVSELRERRVFVLFPKFKIEAEYSLKEPLQNLGIKQIFSGGSDLSGVTNDNDLVVSAVVHKAVLEVNEEGSEAAAVSSVVAVTRIGTQAFEFNVDHPFLFFIRNTVTNDILFAGQVNSL.

Positions 1–16 (MKPLVPLLFLLVSCRA) are cleaved as a signal peptide. N-linked (GlcNAc...) asparagine glycosylation is found at N104, N196, and N265.

The protein belongs to the serpin family. In terms of assembly, interacts with human KLKB1. Interacts with human ST14. Interacts with human PLG (plasmin). Highly expressed in salivary gland. Expressed in midgut and ovary.

It is found in the secreted. In terms of biological role, serine protease inhibitor that modulates blood feeding of ticks on vertebrate species. Modestly inhibits human trypsin, plasma kallikrein (KLKB1), matriptase (ST14) and plasmin (PLG) via a classic serpin inhibitory mechanism. Modestly reduces enzymatic activity of human alpha-chymotrypsin, coagulation factor Xa (F10), factor XIIa (F12), cathepsin G (CTSG), tPA/tissue-type plasminogen activator (PLAT) and uPA/urokinase-type plasminogen activator (PLAU). Probably acts as a substrate rather than an inhibitor for the human neutrophil elastase (ELANE) and thus reduces its enzymatic activity in in vitro assays. Decreases expression of adhesion molecules VCAM1 and CD99 on the surface of human cells. Increases the production of chemokines for neutrophils and monocytes, such as KC/CXCL1, MIP-2/CXCL2 and MIP-1/CCL2, and anti-inflammatory cytokine IL10 in mouse inflammation models. Reduces the recruitment of mouse neutrophils and monocytes to the site of inflammation. Decreases expression of CXCR2 on the surface of mouse neutrophils. Increases expression of integrin ITGAM/ITGB2 on the surface of mouse neutrophils. The polypeptide is Iripin-1 (Ixodes ricinus (Common tick)).